The primary structure comprises 153 residues: Mitochondrial fission 1 protein (153 aa).

Residues 1–127 are Cytoplasmic-facing; that stretch reads MFGKSTYPAL…SIHEKVTQEG (127 aa). Residues 76 to 109 form a TPR repeat; it reads RECLYYLALGSYKIGDYSNATRYADTLLKNEPEN. A helical membrane pass occupies residues 128–148; the sequence is LIGIGIAGGALAVGVGILGAL. Residues 149 to 153 are Mitochondrial intermembrane-facing; it reads LRKKR.

This sequence belongs to the FIS1 family.

It is found in the mitochondrion outer membrane. In terms of biological role, has a role in mitochondrial fission. Has a role in outer membrane fission but not matrix separation. This chain is Mitochondrial fission 1 protein (FIS1), found in Debaryomyces hansenii (strain ATCC 36239 / CBS 767 / BCRC 21394 / JCM 1990 / NBRC 0083 / IGC 2968) (Yeast).